The sequence spans 233 residues: Probable O-methyltransferase Rv1703c (233 aa).

S-adenosyl-L-methionine-binding positions include valine 55, glutamate 77, 79–80, and glutamate 102; that span reads GT. Aspartate 157 contributes to the a divalent metal cation binding site. An S-adenosyl-L-methionine-binding site is contributed by aspartate 159. A divalent metal cation is bound by residues aspartate 185 and asparagine 186.

This sequence belongs to the class I-like SAM-binding methyltransferase superfamily. Cation-dependent O-methyltransferase family.

Specifically methylates an O atom of its substrate. The sequence is that of Probable O-methyltransferase Rv1703c from Mycobacterium tuberculosis (strain ATCC 25618 / H37Rv).